Reading from the N-terminus, the 155-residue chain is Ribosome maturation factor RimP (155 aa).

The protein belongs to the RimP family.

It localises to the cytoplasm. Functionally, required for maturation of 30S ribosomal subunits. This chain is Ribosome maturation factor RimP, found in Listeria monocytogenes serovar 1/2a (strain ATCC BAA-679 / EGD-e).